Consider the following 676-residue polypeptide: Polyunsaturated fatty acid lipoxygenase ALOX15B (676 aa).

Positions 2-124 (AEFRVRVSTG…TLVLQEGTAK (123 aa)) constitute a PLAT domain. Glycine 15, glycine 17, aspartate 39, asparagine 40, glycine 42, glutamate 44, aspartate 85, and alanine 86 together coordinate Ca(2+). Residues 125-676 (VSWADHHPVL…PPLIENSVSI (552 aa)) form the Lipoxygenase domain. Histidine 373, histidine 378, histidine 553, and isoleucine 676 together coordinate Fe cation.

The protein belongs to the lipoxygenase family. Requires Fe cation as cofactor. In terms of tissue distribution, expressed in hair, prostate, lung, ovary, lymph node, spinal cord and cornea.

It is found in the nucleus. Its subcellular location is the cytoplasm. The protein resides in the cytosol. The protein localises to the cell membrane. It localises to the cytoskeleton. It is found in the membrane. Its subcellular location is the cell junction. The protein resides in the adherens junction. The protein localises to the focal adhesion. The catalysed reaction is (5Z,8Z,11Z,14Z)-eicosatetraenoate + O2 = (15S)-hydroperoxy-(5Z,8Z,11Z,13E)-eicosatetraenoate. It carries out the reaction (9Z,12Z)-octadecadienoate + O2 = 13-hydroperoxy-(9Z,11E)-octadecadienoate. It catalyses the reaction (5S)-hydroxy-(6E,8Z,11Z,14Z)-eicosatetraenoate + O2 = (5S)-hydroxy-(15S)-hydroperoxy-(6E,8Z,11Z,13E)-eicosatetraenoate. The enzyme catalyses (5Z,8Z,11Z,14Z)-eicosatetraenoate + O2 = 5-hydroperoxy-(6E,8Z,11Z,14Z)-eicosatetraenoate. The catalysed reaction is (5S,6R)-dihydroxy-(7E,9E,11Z,14Z)-eicosatetraenoate + O2 = (5S,6R)-dihydroxy-(15S)-hydroperoxy-(7E,9E,11Z,13E)-eicosatetraenoate. It carries out the reaction (5S)-hydroperoxy-(6E,8Z,11Z,14Z)-eicosatetraenoate + O2 = (5S,15S)-dihydroperoxy-(6E,8Z,11Z,13E)-eicosatetraenoate. It catalyses the reaction 2-(5Z,8Z,11Z,14Z-eicosatetraenoyl)-glycerol + O2 = 2-[15(S)-hydroperoxy-(5Z,8Z,11Z,13E)-eicosatetraenoyl]-glycerol. The enzyme catalyses (8S)-hydroperoxy-(5Z,9E,11Z,14Z)-eicosatetraenoate + O2 = (8S,15S)-dihydroperoxy-(5Z,9E,11Z,13E)-eicosatetraenoate. The catalysed reaction is N-(5Z,8Z,11Z,14Z)-eicosatetraenoyl-L-alanine + O2 = N-(15S)-hydroperoxy-(5Z,8Z,11Z,13E)-eicosatetraenoyl-alanine. It carries out the reaction N-(5Z,8Z,11Z,14Z)-eicosatetraenoyl-gamma-aminobutanoate + O2 = N-(15S)-hydroperoxy-(5Z,8Z,11Z,13E)-eicosatetraenoyl-gamma-aminobutanoate. It catalyses the reaction N-(5Z,8Z,11Z,14Z)-eicosatetraenoyl-glycine + O2 = N-(15S)-hydroperoxy-(5Z,8Z,11Z,13E)-eicosatetraenoyl-glycine. The enzyme catalyses N-(5Z,8Z,11Z,14Z)-eicosatetraenoyl-taurine + O2 = N-(15S)-hydroperoxy-(5Z,8Z,11Z,13E)-eicosatetraenoyl-taurine. The catalysed reaction is 2-(5Z,8Z,11Z,14Z-eicosatetraenoyl)-glycerol + O2 = 2-[12-hydroperoxy-(5Z,8Z,10E,14Z)-eicosatetraenoyl]-glycerol. It carries out the reaction 1-octadecanoyl-2-(5Z,8Z,11Z,14Z-eicosatetraenoyl)-sn-glycero-3-phosphocholine + O2 = 1-octadecanoyl-2-(15-hydroperoxy-5Z,8Z,11Z,13E-eicosatetraenoyl)-sn-glycero-3-phosphocholine. It catalyses the reaction a 1-acyl-2-(5Z,8Z,11Z,14Z-eicosatetraenoyl)-sn-glycero-3-phospho-(1D-myo-inositol) + O2 = a 1-acyl-2-(15-hydroperoxy-5Z,8Z,11Z,13E-eicosatetraenoyl)-sn-glycero-3-phospho-(1D-myo-inositol). The enzyme catalyses a 1-acyl-2-(8Z,11Z,14Z-eicosatrienoyl)-sn-glycero-3-phospho-(1D-myo-inositol) + O2 = a 1-acyl-2-(15-hydroperoxy-8Z,11Z,13E-eicosatrienoyl)-sn-glycero-3-phospho-(1D-myo-inositol). The catalysed reaction is 1-octadecanoyl-2-(5Z,8Z,11Z,14Z)-eicosatetraenoyl-sn-glycero-3-phosphoethanolamine + O2 = 1-octadecanoyl-2-(15-hydroperoxy-5Z,8Z,11Z,13E-eicosatetraenoyl)-sn-glycero-3-phosphoethanolamine. It carries out the reaction 1-octadecanoyl-2-(5Z,8Z,11Z,14Z-eicosatetraenoyl)-sn-glycero-3-phospho-(1D-myo-inositol) + O2 = 1-octadecanoyl-2-(15-hydroperoxy-5Z,8Z,11Z,13E-eicosatetraenoyl)-sn-glycero-3-phospho-(1D-myo-inositol). It catalyses the reaction (8Z,11Z,14Z)-eicosatrienoate + O2 = 15-hydroperoxy-(8Z,11Z,13E)-eicosatrienoate. The enzyme catalyses (7S)-hydroperoxy-(4Z,8E,10Z,13Z,16Z,19Z)-docosahexaenoate + O2 = (7S,17S)-dihydroperoxy-(4Z,8E,10Z,13Z,15E,19Z)-docosahexaenoate. The catalysed reaction is (5Z,8Z,11Z,14Z)-eicosatetraenoate + O2 = 15-hydroperoxy-(5Z,8Z,11Z,13E)-eicosatetraenoate. It functions in the pathway lipid metabolism; hydroperoxy eicosatetraenoic acid biosynthesis. In terms of biological role, non-heme iron-containing dioxygenase that catalyzes the stereo-specific peroxidation of free and esterified polyunsaturated fatty acids (PUFAs) generating a spectrum of bioactive lipid mediators. It inserts peroxyl groups at C15 of arachidonate ((5Z,8Z,11Z,14Z)-eicosatetraenoate) producing (15S)-hydroperoxyeicosatetraenoate/(15S)-HPETE. Also peroxidizes linoleate ((9Z,12Z)-octadecadienoate) to 13-hydroperoxyoctadecadienoate/13-HPODE. Oxygenates arachidonyl derivatives such as 2-arachidonoylglycerol (2-AG) leading to the production and extracellular release of 15-hydroxyeicosatetraenoyl glycerol (15-HETE-G) that acts as a peroxisome proliferator-activated receptor alpha agonist. Has the ability to efficiently class-switch ALOX5 pro-inflammatory mediators into anti-inflammatory intermediates. Participates in the sequential oxidations of DHA ((4Z,7Z,10Z,13Z,16Z,19Z)-docosahexaenoate) to generate specialized pro-resolving mediators (SPMs) resolvin D5 ((7S,17S)-diHPDHA), which can actively down-regulate the immune response and have anti-aggregation properties with platelets. In addition to free PUFAs hydrolyzed from phospholipids, it directly oxidizes PUFAs esterified to membrane-bound phospholipids. Has no detectable 8S-lipoxygenase activity on arachidonate but reacts with (8S)-HPETE to produce (8S,15S)-diHPETE. May regulate progression through the cell cycle and cell proliferation. May also regulate cytokine secretion by macrophages and therefore play a role in the immune response. May also regulate macrophage differentiation into proatherogenic foam cells. Its function is as follows. Does not convert arachidonic acid to 15S-hydroperoxyeicosatetraenoic acid/(15S)-HPETE. This Homo sapiens (Human) protein is Polyunsaturated fatty acid lipoxygenase ALOX15B.